Reading from the N-terminus, the 296-residue chain is Elongation factor Ts (296 aa).

Residues 81–84 (TDFV) are involved in Mg(2+) ion dislocation from EF-Tu.

This sequence belongs to the EF-Ts family.

The protein localises to the cytoplasm. In terms of biological role, associates with the EF-Tu.GDP complex and induces the exchange of GDP to GTP. It remains bound to the aminoacyl-tRNA.EF-Tu.GTP complex up to the GTP hydrolysis stage on the ribosome. The protein is Elongation factor Ts of Ruthia magnifica subsp. Calyptogena magnifica.